The sequence spans 290 residues: Glutamate racemase (290 aa).

Residues 32–33 (DS) and 64–65 (YG) contribute to the substrate site. The active-site Proton donor/acceptor is C96. 97–98 (NT) contacts substrate. The active-site Proton donor/acceptor is the C208. Residue 209 to 210 (TH) coordinates substrate.

This sequence belongs to the aspartate/glutamate racemases family.

It catalyses the reaction L-glutamate = D-glutamate. Its pathway is cell wall biogenesis; peptidoglycan biosynthesis. Functionally, provides the (R)-glutamate required for cell wall biosynthesis. The chain is Glutamate racemase from Sodalis glossinidius (strain morsitans).